The following is a 92-amino-acid chain: Large ribosomal subunit protein bL31 (92 aa).

The segment at 66–92 is disordered; sequence GMGSANPDVDAPAPKKAAKKSDAESDS. Low complexity predominate over residues 70 to 80; that stretch reads ANPDVDAPAPK.

The protein belongs to the bacterial ribosomal protein bL31 family. Type A subfamily. As to quaternary structure, part of the 50S ribosomal subunit.

In terms of biological role, binds the 23S rRNA. This Synechococcus sp. (strain RCC307) protein is Large ribosomal subunit protein bL31.